A 694-amino-acid polypeptide reads, in one-letter code: Inactive protein-arginine deiminase type-6 (694 aa).

Residues S10 and S446 each carry the phosphoserine modification.

This sequence belongs to the protein arginine deiminase family. Homodimers. Associates with alpha-tubulin. In terms of processing, phosphorylation at Ser-10, possibly by RSK-type kinases, and Ser-446 creates binding sites for 14-3-3 proteins. In terms of tissue distribution, highly expressed in oocytes and weakly expressed in other somatic tissues.

Its subcellular location is the cytoplasm. It is found in the cytoplasmic vesicle. The protein resides in the secretory vesicle. It localises to the cortical granule. The protein localises to the nucleus. Structural constituent of cytoplasmic lattices, which plays a key role in early embryonic development. Cytoplasmic lattices consist in fibrous structures found in the cytoplasm of oocytes and preimplantation embryos. They are required to store maternal proteins critical for embryonic development, such as ribosomal proteins and proteins that control epigenetic reprogramming of the preimplantation embryo, and prevent their degradation or activation. In contrast to other members of the family, does not show protein-arginine deiminase activity due to its inability to bind Ca(2+). This is Inactive protein-arginine deiminase type-6 from Homo sapiens (Human).